We begin with the raw amino-acid sequence, 274 residues long: Pyrogallol hydroxytransferase small subunit (274 aa).

12 residues coordinate [4Fe-4S] cluster: Cys-13, Cys-16, Cys-19, Cys-23, Cys-68, Cys-71, Cys-76, Cys-109, Cys-126, Cys-129, Cys-145, and Cys-149.

Heterodimer of a large and a small subunit. [4Fe-4S] cluster serves as cofactor.

The enzyme catalyses 1,2,3,5-tetrahydroxybenzene + 1,2,3-trihydroxybenzene = 1,2,3,5-tetrahydroxybenzene + 1,3,5-trihydroxybenzene. In terms of biological role, isomerization of pyrogallol to phloroglucin. The sequence is that of Pyrogallol hydroxytransferase small subunit (bthL) from Pelobacter acidigallici.